Consider the following 966-residue polypeptide: Calsyntenin-2 (966 aa).

Positions 1-20 (MLPGRLCLVPLLLALGVGSG) are cleaved as a signal peptide. Residues 21–835 (GGSGDGGDSR…SIQRSSVVPS (815 aa)) are Extracellular-facing. Cadherin domains follow at residues 46-162 (IETS…APTF) and 163-282 (KEPA…MPLF). Residues Asn-58 and Asn-100 are each glycosylated (N-linked (GlcNAc...) asparagine). N-linked (GlcNAc...) asparagine glycosylation is found at Asn-344, Asn-376, Asn-720, and Asn-733. The chain crosses the membrane as a helical span at residues 836–856 (IATVVIIISVCMLVFVVAMGV). The Cytoplasmic segment spans residues 857 to 966 (YRVRIAHQHF…NTAGVINIWK (110 aa)). Residues 890 to 966 (NPMEKHEGPG…NTAGVINIWK (77 aa)) are disordered. Acidic residues predominate over residues 901–916 (GEDETTEVEEEEEAEE). Residues 943–960 (QSGTSSQSPERSTWNTAG) show a composition bias toward polar residues.

It belongs to the calsyntenin family. Proteolytically processed under normal cellular conditions. A primary zeta-cleavage generates a large extracellular (soluble) N-terminal domain (sAlc) and a short C-terminal transmembrane fragment (CTF1). A secondary cleavage catalyzed by gamma-secretase within the transmembrane domain releases the beta-Alc-gamma chain in the extracellular milieu and produces an intracellular fragment (AlcICD). This processing is strongly suppressed in the tripartite complex formed with APBA2 and APP, which seems to prevent the association with PSEN1. Restricted to the brain. In the cerebral cortex, found in the somas and neuropil of all layers. Expressed at highest levels in neurons of cortical layers 5 and 6 and, at lower levels, in neurons of the upper layers. Highly expressed in Purkinje cells. Also found in a few scattered interneurons throughout the granule cell layer and occasionally in neurons in the molecular layer (at protein level). Present throughout all cortical layers, highest levels in GABAergic neurons (based on morphology and distribution pattern).

Its subcellular location is the postsynaptic cell membrane. The protein localises to the endoplasmic reticulum membrane. The protein resides in the golgi apparatus membrane. It localises to the cell projection. It is found in the dendrite. Its function is as follows. Postsynaptic adhesion molecule that binds to presynaptic neurexins to mediate synapse formation, and which is involved in learning and memory. Promotes synapse development by acting as a cell adhesion molecule at the postsynaptic membrane, which associates with neurexin-alpha at the presynaptic membrane. This is Calsyntenin-2 from Mus musculus (Mouse).